The primary structure comprises 1324 residues: Structural maintenance of chromosomes protein 4 (1324 aa).

A disordered region spans residues 1–24 (MSDKGIFRTSSTPSIVDVTPDRGE). A Phosphothreonine; by CDC2 modification is found at T19. 155 to 162 (GPNGSGKS) lines the ATP pocket. Coiled coils occupy residues 310–337 (QELS…AKLE) and 370–628 (NKKT…KASL). An SMC hinge domain is found at 651–764 (NGFFGRLGDL…KNLEQANRIA (114 aa)). Coiled coils occupy residues 825 to 1077 (YRQH…MSNL) and 1297 to 1324 (LSSR…ILTD).

This sequence belongs to the SMC family. SMC4 subfamily. In terms of assembly, forms a heterodimer with cut14/smc2. Component of the condensin complex, which contains the smc2 and smc4 heterodimer, and three non smc subunits that probably regulate the complex: cnd1, cnd2 and cnd3. Interacts with C1739.07. Post-translationally, phosphorylated by CDC2 on Thr-19 at metaphase.

It localises to the nucleus. Its subcellular location is the cytoplasm. The protein resides in the chromosome. In terms of biological role, central component of the condensin complex, a complex required for conversion of interphase chromatin into mitotic-like condense chromosomes. The condensin complex probably introduces positive supercoils into relaxed DNA in the presence of type I topoisomerases and converts nicked DNA into positive knotted forms in the presence of type II topoisomerases. This Schizosaccharomyces pombe (strain 972 / ATCC 24843) (Fission yeast) protein is Structural maintenance of chromosomes protein 4 (cut3).